We begin with the raw amino-acid sequence, 367 residues long: Pectate lyase 1 (367 aa).

An N-terminal signal peptide occupies residues 1-21; that stretch reads MASPCLIAVLVFLCAIVSCYS. The cysteines at positions 28 and 45 are disulfide-linked. The interval 38–305 is beta-helix; the sequence is NRMKLADCAV…YKKEVTKRIG (268 aa). The tract at residues 92–104 is igE-binding. Binds to IgE in 5 out of 7 patients tested; the sequence is IFSQNMNIKLKMP. Cysteine 128 and cysteine 147 are disulfide-bonded. An N-linked (GlcNAc...) asparagine glycan is attached at asparagine 148. Aspartate 170 contributes to the Ca(2+) binding site. Asparagine 178 carries N-linked (GlcNAc...) asparagine glycosylation. Ca(2+)-binding residues include aspartate 194 and aspartate 198. Positions 239–250 are igE-binding. Binds to IgE in 6 out of 7 patients tested; it reads AFNQFGPNAGQR. The active site involves arginine 250. Positions 251 to 258 are igE-binding. Binds to IgE in 5 out of 7 patients tested; sequence MPRARYGL. The cysteines at positions 306 and 312 are disulfide-linked. Residues 317-327 are igE-binding. Binds to IgE in 3 out of 7 patients tested; the sequence is WRSTRDAFING.

The protein belongs to the polysaccharide lyase 1 family. Amb a subfamily. Ca(2+) serves as cofactor. N-glycosylated; consists of complex-type N-glycans containing the Lewis a antigen (Galbeta1-3(Fucalpha1-4)GlcNAcbeta1-). In terms of tissue distribution, expressed in pollen (at protein level).

The enzyme catalyses Eliminative cleavage of (1-&gt;4)-alpha-D-galacturonan to give oligosaccharides with 4-deoxy-alpha-D-galact-4-enuronosyl groups at their non-reducing ends.. It participates in glycan metabolism; pectin degradation; 2-dehydro-3-deoxy-D-gluconate from pectin: step 2/5. Its function is as follows. Has low pectate lyase activity. The polypeptide is Pectate lyase 1 (Juniperus ashei (Ozark white cedar)).